A 129-amino-acid polypeptide reads, in one-letter code: MAKKPSKKKVKRQVASGRAYIHASYNNTIVTITDPDGNPITWSSGGVIGYKGSRKGTPYAAQLAALDAAKKAMAYGMQSVDVIVRGTGAGREQAIRALQASGLQVKSIVDDTPVPHNGCRPKKKFRKAS.

The interval 109-129 (VDDTPVPHNGCRPKKKFRKAS) is disordered. The span at 119–129 (CRPKKKFRKAS) shows a compositional bias: basic residues.

The protein belongs to the universal ribosomal protein uS11 family. Part of the 30S ribosomal subunit. Interacts with proteins S7 and S18. Binds to the C-terminus of IF-3; however exactly how IF-3 interacts with the 30S subunit is unclear.

Located on the upper part of the platform of the 30S subunit, where it bridges several disparate RNA helices of the 16S rRNA. Forms part of the Shine-Dalgarno cleft in the 70S ribosome. This Thermus thermophilus (strain ATCC BAA-163 / DSM 7039 / HB27) protein is Small ribosomal subunit protein uS11 (rpsK).